The following is a 140-amino-acid chain: Large ribosomal subunit protein bL19 (140 aa).

The span at 113-126 shows a compositional bias: basic and acidic residues; sequence RIAERQDRTADGKI. Residues 113-140 are disordered; it reads RIAERQDRTADGKIKKGGKSAPAPTAAE.

This sequence belongs to the bacterial ribosomal protein bL19 family.

Functionally, this protein is located at the 30S-50S ribosomal subunit interface and may play a role in the structure and function of the aminoacyl-tRNA binding site. This Xanthobacter autotrophicus (strain ATCC BAA-1158 / Py2) protein is Large ribosomal subunit protein bL19.